Reading from the N-terminus, the 890-residue chain is tRNase Z TRZ3, mitochondrial (890 aa).

The N-terminal 44 residues, 1 to 44, are a transit peptide targeting the mitochondrion; the sequence is MINSMPYLHKNLRLLRLLSSKSSPFPLSLRPFSPRSFSLSTLFS. The segment at 46–67 is disordered; it reads SSSSSSMENNEATNGSKSSSNS.

This sequence belongs to the RNase Z family. In terms of assembly, homodimer. The cofactor is Zn(2+). Ca(2+) serves as cofactor. Requires Mn(2+) as cofactor. Mg(2+) is required as a cofactor.

It localises to the mitochondrion. It is found in the nucleus. It carries out the reaction Endonucleolytic cleavage of RNA, removing extra 3' nucleotides from tRNA precursor, generating 3' termini of tRNAs. A 3'-hydroxy group is left at the tRNA terminus and a 5'-phosphoryl group is left at the trailer molecule.. In terms of biological role, zinc phosphodiesterase, which displays tRNA 3'-processing endonuclease activity. Involved in tRNA maturation, by removing a 3'-trailer from precursor tRNA. Can process the mitochondrial tRNA-like structures (t-elements). Involved in the processing of small nucleolar RNAs (snoRNAs). The chain is tRNase Z TRZ3, mitochondrial from Arabidopsis thaliana (Mouse-ear cress).